Here is a 238-residue protein sequence, read N- to C-terminus: Demethylmenaquinone methyltransferase (238 aa).

S-adenosyl-L-methionine is bound by residues Thr-65, Asp-85, and 109 to 110 (DA).

It belongs to the class I-like SAM-binding methyltransferase superfamily. MenG/UbiE family.

The enzyme catalyses a 2-demethylmenaquinol + S-adenosyl-L-methionine = a menaquinol + S-adenosyl-L-homocysteine + H(+). It participates in quinol/quinone metabolism; menaquinone biosynthesis; menaquinol from 1,4-dihydroxy-2-naphthoate: step 2/2. In terms of biological role, methyltransferase required for the conversion of demethylmenaquinol (DMKH2) to menaquinol (MKH2). This chain is Demethylmenaquinone methyltransferase, found in Roseiflexus sp. (strain RS-1).